Consider the following 2094-residue polypeptide: Non-reducing polyketide synthase ustP (2094 aa).

The tract at residues 9–243 is N-terminal acylcarrier protein transacylase (SAT) domain; it reads VFGDLSVPYH…GKIQVGGLFH (235 aa). The tract at residues 357–377 is disordered; that stretch reads NTAGVDSSSRGSGHADAEKQP. Residues 379–813 form the Ketosynthase family 3 (KS3) domain; that stretch reads RSKIAIIGFS…GGNSSVLVED (435 aa). Catalysis depends on for beta-ketoacyl synthase activity residues Cys-551, His-686, and His-727. Residues 914-1227 are malonyl-CoA:ACP transacylase (MAT) domain; it reads FSFTGQGSQY…EDDCKIFTPA (314 aa). Ser-1004 functions as the For acyl/malonyl transferase activity in the catalytic mechanism. Residues 1305–1629 form a product template (PT) domain region; the sequence is TTSVQYITAE…QRKVLDLVLP (325 aa). Residues 1308–1445 form an N-terminal hotdog fold region; sequence VQYITAESYG…CSGFFTDKSR (138 aa). Residues 1308 to 1625 enclose the PKS/mFAS DH domain; the sequence is VQYITAESYG…FAAVQRKVLD (318 aa). Catalysis depends on His-1341, which acts as the Proton acceptor; for dehydratase activity. Residues 1473 to 1625 are C-terminal hotdog fold; that stretch reads GSVHMIKTGM…FAAVQRKVLD (153 aa). Asp-1536 functions as the Proton donor; for dehydratase activity in the catalytic mechanism. Low complexity predominate over residues 1644–1671; it reads AAAAPSQRQQQQQQQQQQQPAQPVAASQ. The segment at 1644–1689 is disordered; sequence AAAAPSQRQQQQQQQQQQQPAQPVAASQESGMDDMPPTLVPSEKKD. One can recognise a Carrier domain in the interval 1689–1763; the sequence is DVPSEKLKVI…ELVRHILGSS (75 aa). Ser-1723 is subject to O-(pantetheine 4'-phosphoryl)serine. The span at 1762–1778 shows a compositional bias: polar residues; it reads SSTPSSDSGPATPSITP. The interval 1762–1782 is disordered; it reads SSTPSSDSGPATPSITPLQEP. Residues 1844–2069 form a claisen cyclase domain region; sequence KVWLFPDGSG…GVVEGAHHFS (226 aa). Ser-1916 functions as the For Claisen cyclase activity in the catalytic mechanism.

The catalysed reaction is 6 malonyl-CoA + acetyl-CoA + 6 H(+) = naphtopyrone YWA1 + 6 CO2 + 7 CoA + H2O. It functions in the pathway secondary metabolite biosynthesis. Non-reducing polyketide synthase; part of the gene cluster that mediates the biosynthesis of ustilaginoidins, dimeric gamma-naphthopyrones isolated from different fungal species. The first step in the biosynthesis of ustilaginoidins is the production of gamma-naphthopyrone precursor YWA1 by the non-reducing polyketide synthase ustP, via condensation of one acetyl-CoA starter unit with 6 malonyl-CoA units. YWA1 is then probably substrate of the ustZ to yield norrubrofusarin via a dehydration reaction. A key enzyme in the biosynthetic pathway is the laccase ustL, which catalyzes the oxidative dimerization of norrubrofusarin to ustilaginoidin A. It can produce the M- and P-atropisomers in varying amounts, depending on the reaction conditions. For the biosynthesis of 3-methylustilaginoid in derivatives such as chaetochromin A, a methylated derivative of YWA1 is required. The C-methylation is considered to be catalyzed by ustM, the phosphopantetheine attachment site of which indicates that it acts on the growing polyketide chain before release of the product. For the biosynthesis of chaetochromin A, it is assumed that saturation of the D2 double bond takes place before dimerization, and is probably catalyzed by an external reductase because no candidate gene was identified within the cluster. This is Non-reducing polyketide synthase ustP from Ustilaginoidea virens (Rice false smut fungus).